Reading from the N-terminus, the 283-residue chain is Pantothenate synthetase (283 aa).

Met-30–His-37 contacts ATP. Catalysis depends on His-37, which acts as the Proton donor. A (R)-pantoate-binding site is contributed by Gln-61. Beta-alanine is bound at residue Gln-61. Gly-150–Asp-153 is an ATP binding site. Gln-156 contacts (R)-pantoate. ATP-binding positions include Val-179 and Met-187–Arg-190.

This sequence belongs to the pantothenate synthetase family. In terms of assembly, homodimer.

Its subcellular location is the cytoplasm. It catalyses the reaction (R)-pantoate + beta-alanine + ATP = (R)-pantothenate + AMP + diphosphate + H(+). The protein operates within cofactor biosynthesis; (R)-pantothenate biosynthesis; (R)-pantothenate from (R)-pantoate and beta-alanine: step 1/1. Functionally, catalyzes the condensation of pantoate with beta-alanine in an ATP-dependent reaction via a pantoyl-adenylate intermediate. This chain is Pantothenate synthetase, found in Rhodopirellula baltica (strain DSM 10527 / NCIMB 13988 / SH1).